We begin with the raw amino-acid sequence, 841 residues long: Toll-like receptor 4 (841 aa).

The first 23 residues, 1–23, serve as a signal peptide directing secretion; it reads MMARVRLAAALIPATAILSCLRT. Topologically, residues 24-632 are extracellular; that stretch reads ESWDPCVQVV…FRNATCQMSK (609 aa). An intrachain disulfide couples Cys29 to Cys40. N-linked (GlcNAc...) asparagine glycans are attached at residues Asn35 and Asn73. 7 LRR repeats span residues 55 to 76, 79 to 100, 103 to 124, 127 to 148, 151 to 172, 176 to 197, and 205 to 225; these read STKM…NFSS, ELQV…TFQG, HLST…AFSG, SLQK…PIGH, TLKE…EYFS, NLEH…DVKV, and NLSL…TFKE. Residues Asn205, Asn238, Asn282, and Asn309 are each glycosylated (N-linked (GlcNAc...) asparagine). A disulfide bond links Cys281 and Cys306. LRR repeat units lie at residues 352-373, 374-395, 400-422, 423-444, 448-469, 472-495, 497-518, 521-542, and 545-568; these read SLKK…FQLP, SLQY…SHAD, NLKH…MGLE, KLEH…SVFL, NLRY…IFTG, SLKT…FTEL, NLTV…AFHS, SLQV…LYEP, and LLRI…QNLP. An intrachain disulfide couples Cys390 to Cys391. N-linked (GlcNAc...) asparagine glycosylation is found at Asn497 and Asn526. N-linked (GlcNAc...) asparagine glycans are attached at residues Asn570 and Asn575. Residues 579-630 enclose the LRRCT domain; sequence NAFACVCEHQRFLQWVKDQRQLLVGAEQMMCAEPLDMKDMPVLSFRNATCQM. Cystine bridges form between Cys583–Cys609 and Cys585–Cys628. The N-linked (GlcNAc...) asparagine glycan is linked to Asn625. The helical transmembrane segment at 633 to 653 threads the bilayer; the sequence is MIISVSVVTVLLVSVVGVLVY. Over 654–841 the chain is Cytoplasmic; it reads KFYFHLMLLA…TNPQEATTST (188 aa). The TIR domain occupies 673–816; the sequence is STYGAFVIYS…VFWRRLRKAL (144 aa). The segment at 820–841 is disordered; it reads KPQSPEGTADAETNPQEATTST. The segment covering 830-841 has biased composition (polar residues); that stretch reads AETNPQEATTST.

This sequence belongs to the Toll-like receptor family. Belongs to the lipopolysaccharide (LPS) receptor, a multi-protein complex containing at least CD14, LY96 and TLR4. Binding to bacterial LPS leads to homodimerization. Interacts with LY96 via the extracellular domain. Interacts with MYD88 and TIRAP via their respective TIR domains. Interacts with TICAM2. Interacts with NOX4. Interacts with CNPY3 and HSP90B1; this interaction is required for proper folding in the endoplasmic reticulum. Interacts with MAP3K21; this interaction leads to negative regulation of TLR4 signaling. Interacts with CD36, following CD36 stimulation by oxLDL or amyloid-beta 42, and forms a heterodimer with TLR6. The trimeric complex is internalized and triggers inflammatory response. LYN kinase activity facilitates TLR4-TLR6 heterodimerization and signal initiation. Interacts with TICAM1 in response to LPS in a WDFY1-dependent manner. Interacts with WDFY1 in response to LPS. Interacts with SMPDL3B. Interacts with CEACAM1; upon lipopolysaccharide stimulation, forms a complex including TLR4 and the phosphorylated form of SYK and CEACAM1, which in turn, recruits PTPN6 that dephosphorylates SYK, reducing the production of reactive oxygen species (ROS) and lysosome disruption, which in turn, reduces the activity of the inflammasome. Interacts with RFTN1; the interaction occurs in response to lipopolysaccharide stimulation. Interacts with SCIMP; the interaction occurs in response to lipopolysaccharide stimulation and is enhanced by phosphorylation of SCIMP by LYN. This interaction facilitates the phosphorylation of TLR4 by LYN which elicits a selective cytokine response in macrophages. Interacts with TRAF3IP3. Interacts with TREM1; this interaction enhances TLR4-mediated inflammatory response. Interacts with ZG16B/PAUF. Interacts with CD82; this interaction inhibits TLR4-mediated signaling pathway. Post-translationally, phosphorylated on tyrosine residues by LYN after binding lipopolysaccharide. In terms of processing, ubiquitinated by RNF128 via 'Lys-28'-linked polyubiquitin chains, leading to proteasomal degradation.

It localises to the cell membrane. Its subcellular location is the early endosome. It is found in the cell projection. The protein resides in the ruffle. Transmembrane receptor that functions as a pattern recognition receptor recognizing pathogen- and damage-associated molecular patterns (PAMPs and DAMPs) to induce innate immune responses via downstream signaling pathways. At the plasma membrane, cooperates with LY96 to mediate the innate immune response to bacterial lipopolysaccharide (LPS). Also involved in LPS-independent inflammatory responses triggered by free fatty acids, such as palmitate, and Ni(2+). Mechanistically, acts via MYD88, TIRAP and TRAF6, leading to NF-kappa-B activation, cytokine secretion and the inflammatory response. Alternatively, CD14-mediated TLR4 internalization via endocytosis is associated with the initiation of a MYD88-independent signaling via the TICAM1-TBK1-IRF3 axis leading to type I interferon production. In addition to the secretion of proinflammatory cytokines, initiates the activation of NLRP3 inflammasome and formation of a positive feedback loop between autophagy and NF-kappa-B signaling cascade. In complex with TLR6, promotes inflammation in monocytes/macrophages by associating with TLR6 and the receptor CD86. Upon ligand binding, such as oxLDL or amyloid-beta 42, the TLR4:TLR6 complex is internalized and triggers inflammatory response, leading to NF-kappa-B-dependent production of CXCL1, CXCL2 and CCL9 cytokines, via MYD88 signaling pathway, and CCL5 cytokine, via TICAM1 signaling pathway. In myeloid dendritic cells, vesicular stomatitis virus glycoprotein G but not LPS promotes the activation of IRF7, leading to type I IFN production in a CD14-dependent manner. This Boselaphus tragocamelus (Nilgai) protein is Toll-like receptor 4 (TLR4).